An 87-amino-acid chain; its full sequence is MKNFETLFAELSEKAATRPEGSRTVAELDSGVHGIGKKVVEEAAEVWMAAEYESDEAAAEEISQLLYHLQVLMLAKGLTLEDVYKHL.

The protein belongs to the PRA-PH family.

Its subcellular location is the cytoplasm. The catalysed reaction is 1-(5-phospho-beta-D-ribosyl)-ATP + H2O = 1-(5-phospho-beta-D-ribosyl)-5'-AMP + diphosphate + H(+). It functions in the pathway amino-acid biosynthesis; L-histidine biosynthesis; L-histidine from 5-phospho-alpha-D-ribose 1-diphosphate: step 2/9. This chain is Phosphoribosyl-ATP pyrophosphatase, found in Pseudarthrobacter chlorophenolicus (strain ATCC 700700 / DSM 12829 / CIP 107037 / JCM 12360 / KCTC 9906 / NCIMB 13794 / A6) (Arthrobacter chlorophenolicus).